A 511-amino-acid polypeptide reads, in one-letter code: Phenylalanine--tRNA ligase alpha subunit (511 aa).

L-phenylalanine-binding positions include T352, 390-392 (QVE), Y429, and F455.

The protein belongs to the class-II aminoacyl-tRNA synthetase family. Phe-tRNA synthetase alpha subunit type 2 subfamily. In terms of assembly, tetramer of two alpha and two beta subunits. Requires Mg(2+) as cofactor.

The protein resides in the cytoplasm. It catalyses the reaction tRNA(Phe) + L-phenylalanine + ATP = L-phenylalanyl-tRNA(Phe) + AMP + diphosphate + H(+). In Methanothermobacter thermautotrophicus (strain ATCC 29096 / DSM 1053 / JCM 10044 / NBRC 100330 / Delta H) (Methanobacterium thermoautotrophicum), this protein is Phenylalanine--tRNA ligase alpha subunit.